A 987-amino-acid chain; its full sequence is KAT8 regulatory NSL complex subunit 1-like protein (987 aa).

Lys134 participates in a covalent cross-link: Glycyl lysine isopeptide (Lys-Gly) (interchain with G-Cter in SUMO2). Position 462 is a phosphoserine (Ser462). The segment at 708–738 is disordered; sequence RKKRHLSETALGERTKLEESDFQHTESGSHS. Residues 718 to 731 are compositionally biased toward basic and acidic residues; it reads LGERTKLEESDFQH. The 122-residue stretch at 794 to 915 folds into the PEHE domain; sequence EILTPSWRMV…QSQETKSLWW (122 aa). Lys859 is modified (N6-acetyllysine). Residues 949–972 are disordered; that stretch reads GEIFGTSVPENGHHPKKQSDGMEE. The span at 959–972 shows a compositional bias: basic and acidic residues; the sequence is NGHHPKKQSDGMEE.

Post-translationally, acetylated on lysine residues by KAT8 upon ionizing radiation-induced DNA damage; deacetylated by HDAC3.

In Homo sapiens (Human), this protein is KAT8 regulatory NSL complex subunit 1-like protein (KANSL1L).